Reading from the N-terminus, the 98-residue chain is MAAINRDDVAHLARLAHIEMSAQELDRMAGELAVIVDSVKSVSEAAGDDVPATSHPIPLTNVFREDVVGHTFSAEQALSGAPDSDDNRFKVPAILDEA.

The segment at 75 to 98 (EQALSGAPDSDDNRFKVPAILDEA) is disordered.

It belongs to the GatC family. As to quaternary structure, heterotrimer of A, B and C subunits.

It catalyses the reaction L-glutamyl-tRNA(Gln) + L-glutamine + ATP + H2O = L-glutaminyl-tRNA(Gln) + L-glutamate + ADP + phosphate + H(+). The enzyme catalyses L-aspartyl-tRNA(Asn) + L-glutamine + ATP + H2O = L-asparaginyl-tRNA(Asn) + L-glutamate + ADP + phosphate + 2 H(+). Functionally, allows the formation of correctly charged Asn-tRNA(Asn) or Gln-tRNA(Gln) through the transamidation of misacylated Asp-tRNA(Asn) or Glu-tRNA(Gln) in organisms which lack either or both of asparaginyl-tRNA or glutaminyl-tRNA synthetases. The reaction takes place in the presence of glutamine and ATP through an activated phospho-Asp-tRNA(Asn) or phospho-Glu-tRNA(Gln). This chain is Aspartyl/glutamyl-tRNA(Asn/Gln) amidotransferase subunit C, found in Pseudarthrobacter chlorophenolicus (strain ATCC 700700 / DSM 12829 / CIP 107037 / JCM 12360 / KCTC 9906 / NCIMB 13794 / A6) (Arthrobacter chlorophenolicus).